The primary structure comprises 185 residues: MTNHVVLYEPLMPANTGNIARTCAGTNTILDLIEPLGFQIDNKKMKRAGLDYWDKVDIRMHDDLDAFLKTLGPNDEMYLISKFSSKNYAQVDYTDPNKDYYFVFGKETTGLPETFMREYYDRNLRIPMSDNIRCYNLSNSVAMVLLEALRQQGFPNMETSHHYENDKLKDNYNRPERYERNLGEN.

S-adenosyl-L-methionine-binding residues include isoleucine 80, glycine 105, and isoleucine 126.

This sequence belongs to the class IV-like SAM-binding methyltransferase superfamily. RNA methyltransferase TrmH family. TrmL subfamily.

It is found in the cytoplasm. The catalysed reaction is cytidine(34) in tRNA + S-adenosyl-L-methionine = 2'-O-methylcytidine(34) in tRNA + S-adenosyl-L-homocysteine + H(+). It catalyses the reaction 5-carboxymethylaminomethyluridine(34) in tRNA(Leu) + S-adenosyl-L-methionine = 5-carboxymethylaminomethyl-2'-O-methyluridine(34) in tRNA(Leu) + S-adenosyl-L-homocysteine + H(+). Functionally, could methylate the ribose at the nucleotide 34 wobble position in tRNA. In Lactobacillus gasseri (strain ATCC 33323 / DSM 20243 / BCRC 14619 / CIP 102991 / JCM 1131 / KCTC 3163 / NCIMB 11718 / NCTC 13722 / AM63), this protein is Putative RNA (cytidine(34)-2'-O)-methyltransferase.